The sequence spans 377 residues: Glutamate 5-kinase (377 aa).

Lys18 provides a ligand contact to ATP. Substrate is bound by residues Ser59, Asp146, and Asn158. ATP contacts are provided by residues 178–179 (SD) and 222–228 (TGGMATK). The PUA domain maps to 286 to 363 (QGWVTVDAGA…DAIEAELGFT (78 aa)).

This sequence belongs to the glutamate 5-kinase family.

Its subcellular location is the cytoplasm. The catalysed reaction is L-glutamate + ATP = L-glutamyl 5-phosphate + ADP. It functions in the pathway amino-acid biosynthesis; L-proline biosynthesis; L-glutamate 5-semialdehyde from L-glutamate: step 1/2. Functionally, catalyzes the transfer of a phosphate group to glutamate to form L-glutamate 5-phosphate. The chain is Glutamate 5-kinase from Caulobacter vibrioides (strain ATCC 19089 / CIP 103742 / CB 15) (Caulobacter crescentus).